A 387-amino-acid polypeptide reads, in one-letter code: tRNA N6-adenosine threonylcarbamoyltransferase (387 aa).

2 residues coordinate Fe cation: H112 and H116. Substrate-binding positions include 134–138 (LASGG), D167, G180, and N325. A Fe cation-binding site is contributed by D353.

This sequence belongs to the KAE1 / TsaD family. Requires Fe(2+) as cofactor.

It localises to the cytoplasm. The enzyme catalyses L-threonylcarbamoyladenylate + adenosine(37) in tRNA = N(6)-L-threonylcarbamoyladenosine(37) in tRNA + AMP + H(+). Required for the formation of a threonylcarbamoyl group on adenosine at position 37 (t(6)A37) in tRNAs that read codons beginning with adenine. Is involved in the transfer of the threonylcarbamoyl moiety of threonylcarbamoyl-AMP (TC-AMP) to the N6 group of A37, together with TsaE and TsaB. TsaD likely plays a direct catalytic role in this reaction. This is tRNA N6-adenosine threonylcarbamoyltransferase from Rickettsia prowazekii (strain Madrid E).